We begin with the raw amino-acid sequence, 295 residues long: UDP-N-acetylenolpyruvoylglucosamine reductase (295 aa).

The 168-residue stretch at 27 to 194 folds into the FAD-binding PCMH-type domain; it reads GVGGEAEVWF…TRVRLKLRRS (168 aa). Arg174 is a catalytic residue. The active-site Proton donor is the Cys221. The active site involves Glu287.

This sequence belongs to the MurB family. The cofactor is FAD.

Its subcellular location is the cytoplasm. The catalysed reaction is UDP-N-acetyl-alpha-D-muramate + NADP(+) = UDP-N-acetyl-3-O-(1-carboxyvinyl)-alpha-D-glucosamine + NADPH + H(+). It functions in the pathway cell wall biogenesis; peptidoglycan biosynthesis. Its function is as follows. Cell wall formation. This is UDP-N-acetylenolpyruvoylglucosamine reductase from Deinococcus geothermalis (strain DSM 11300 / CIP 105573 / AG-3a).